The primary structure comprises 514 residues: GTPase-activating protein gyp1 (514 aa).

Disordered stretches follow at residues 17-65 (LWNG…QPPK) and 130-164 (LPRM…LHSS). Polar residues-rich tracts occupy residues 18–28 (WNGSSSATSDP) and 135–158 (RSTT…TTSR). The 228-residue stretch at 216–443 (GIPSEHRPIV…RMWDTYMAEG (228 aa)) folds into the Rab-GAP TBC domain.

Its subcellular location is the golgi apparatus. The protein localises to the golgi stack. The protein resides in the cytoplasm. It localises to the nucleus. Stimulates specifically the GTPase activity of ypt1. Functions on the Golgi as a negative regulator of ypt1. This is GTPase-activating protein gyp1 from Schizosaccharomyces pombe (strain 972 / ATCC 24843) (Fission yeast).